The primary structure comprises 376 residues: tRNA-specific 2-thiouridylase MnmA (376 aa).

Residues 14–21 and Met40 each bind ATP; that span reads GMSGGVDS. The segment at 100–102 is interaction with target base in tRNA; sequence NPD. The Nucleophile role is filled by Cys105. Cys105 and Cys202 are joined by a disulfide. Position 129 (Gly129) interacts with ATP. Residues 152 to 154 are interaction with tRNA; it reads KDQ. The active-site Cysteine persulfide intermediate is the Cys202. The interaction with tRNA stretch occupies residues 315 to 316; it reads RY.

Belongs to the MnmA/TRMU family.

The protein localises to the cytoplasm. It carries out the reaction S-sulfanyl-L-cysteinyl-[protein] + uridine(34) in tRNA + AH2 + ATP = 2-thiouridine(34) in tRNA + L-cysteinyl-[protein] + A + AMP + diphosphate + H(+). In terms of biological role, catalyzes the 2-thiolation of uridine at the wobble position (U34) of tRNA, leading to the formation of s(2)U34. This is tRNA-specific 2-thiouridylase MnmA from Lactococcus lactis subsp. lactis (strain IL1403) (Streptococcus lactis).